The chain runs to 473 residues: Probable glycine dehydrogenase (decarboxylating) subunit 2 (473 aa).

The residue at position 266 (lysine 266) is an N6-(pyridoxal phosphate)lysine.

This sequence belongs to the GcvP family. C-terminal subunit subfamily. The glycine cleavage system is composed of four proteins: P, T, L and H. In this organism, the P 'protein' is a heterodimer of two subunits. The cofactor is pyridoxal 5'-phosphate.

The catalysed reaction is N(6)-[(R)-lipoyl]-L-lysyl-[glycine-cleavage complex H protein] + glycine + H(+) = N(6)-[(R)-S(8)-aminomethyldihydrolipoyl]-L-lysyl-[glycine-cleavage complex H protein] + CO2. Its function is as follows. The glycine cleavage system catalyzes the degradation of glycine. The P protein binds the alpha-amino group of glycine through its pyridoxal phosphate cofactor; CO(2) is released and the remaining methylamine moiety is then transferred to the lipoamide cofactor of the H protein. The protein is Probable glycine dehydrogenase (decarboxylating) subunit 2 of Thermus thermophilus (strain ATCC BAA-163 / DSM 7039 / HB27).